The primary structure comprises 1051 residues: Serine/threonine-protein kinase ULK1 (1051 aa).

The Protein kinase domain maps to 16–278 (FSRKDLIGHG…FDEFFHHPFL (263 aa)). Residues 22 to 30 (IGHGAFAVV) and lysine 46 contribute to the ATP site. Residue aspartate 138 is the Proton acceptor of the active site. Lysine 162 is modified (N6-acetyllysine). 3 disordered regions span residues 283 to 323 (PIKK…EMPQ), 335 to 358 (AGFL…DDFV), and 394 to 554 (GLES…CRLH). The tract at residues 287–416 (SPPVPVPSYP…TCSSSPSPSG (130 aa)) is interaction with GABARAP and GABARAPL2. 3 stretches are compositionally biased toward low complexity: residues 295–318 (YPSS…PPSL), 340–349 (GSRDSGGSSK), and 400–423 (RTPS…PFSS). Serine 317 is subject to Phosphoserine; by AMPK. A phosphoserine mark is found at serine 403 and serine 450. Residues 437 to 459 (QVHNYQRIEQNLQSPTQQQTARS) show a composition bias toward polar residues. Threonine 456 is subject to Phosphothreonine. Residues serine 467, serine 477, serine 479, and serine 521 each carry the phosphoserine modification. A Phosphoserine; by AMPK modification is found at serine 555. Threonine 574 is subject to Phosphothreonine. Lysine 606 carries the post-translational modification N6-acetyllysine. Residue threonine 635 is modified to Phosphothreonine. Position 637 is a phosphoserine; by AMPK (serine 637). Serine 638 carries the phosphoserine modification. Disordered regions lie at residues 661 to 686 (PDLS…DTRG) and 727 to 787 (APSA…TGSS). Residues 731-745 (GFGGTLHPGARGGGA) show a composition bias toward gly residues. Serine 757 carries the phosphoserine; by MTOR modification. Serine 774 is subject to Phosphoserine. Residues 774–787 (SVGSSSSLGSTGSS) are compositionally biased toward low complexity. A Phosphoserine; by AMPK modification is found at serine 777. Positions 829-1051 (PDLPEETLME…LSALLSGVYA (223 aa)) are C-terminal domain; mediates interaction with SESN2.

This sequence belongs to the protein kinase superfamily. Ser/Thr protein kinase family. APG1/unc-51/ULK1 subfamily. Interacts with GABARAP and GABARAPL2. Interacts (via C-terminus) with ATG13. Part of a complex consisting of ATG13, ATG101, ULK1 and RB1CC1. Associates with the mammalian target of rapamycin complex 1 (mTORC1) through an interaction with RPTOR; the association depends on nutrient conditions and is reduced during starvation. Interacts with FEZ1; SCOC interferes with FEZ1-binding. Interacts with TBC1D14. Interacts (phosphorylated form) with TRIM5. When phosphorylated at Ser-317, interacts with MEFV and BECN1 simultaneously. Interacts with TRIM21 and IRF3, in the presence of TRIM21. Interacts with SESN2. Interacts with SQSTM1. Interacts with C9orf72. Interacts with WDR45. Interacts with ATG13; this interaction is increased in the absence of TMEM39A. Interacts with WIPI2. Interacts with ATP2A2. Interacts with AMBRA1. Interacts with Irgm1; promoting the coassembly of ULK1 and BECN1. Autophosphorylated. Phosphorylated under nutrient-rich conditions; dephosphorylated during starvation or following treatment with rapamycin. In response to nutrient limitation, phosphorylated and activated by AMPK, leading to activate autophagy. Under nutrient sufficiency, phosphorylated by MTOR/mTOR, disrupting the interaction with AMPK and preventing activation of ULK1. In terms of processing, ubiquitinated via 'Lys-63'-linkage by a complex composed of AMBRA1 and TRAF6 following autophagy induction, promoting ULK1 stability and kinase activity. Deubiquitinated by USP20; leading to ULK1 stability and autophagy initiation. Post-translationally, acetylated by KAT5/TIP60 under autophagy induction, promoting protein kinase activity.

The protein resides in the cytoplasm. It localises to the cytosol. The protein localises to the preautophagosomal structure. The enzyme catalyses L-seryl-[protein] + ATP = O-phospho-L-seryl-[protein] + ADP + H(+). The catalysed reaction is L-threonyl-[protein] + ATP = O-phospho-L-threonyl-[protein] + ADP + H(+). Its activity is regulated as follows. Acetylation by KAT5/TIP60 stimulates the protein kinase activity. The protein kinase activity is activated by unanchored 'Lys-63'-linked polyubiquitin chains: unanchored 'Lys-63'-linked polyubiquitin chains are catalyzed by TRIM32 in an AMBRA1-dependent manner. Its function is as follows. Serine/threonine-protein kinase involved in autophagy in response to starvation. Acts upstream of phosphatidylinositol 3-kinase PIK3C3 to regulate the formation of autophagophores, the precursors of autophagosomes. Part of regulatory feedback loops in autophagy: acts both as a downstream effector and negative regulator of mammalian target of rapamycin complex 1 (mTORC1) via interaction with RPTOR. Activated via phosphorylation by AMPK and also acts as a regulator of AMPK by mediating phosphorylation of AMPK subunits PRKAA1, PRKAB2 and PRKAG1, leading to negatively regulate AMPK activity. May phosphorylate ATG13/KIAA0652 and RPTOR; however such data need additional evidences. Plays a role early in neuronal differentiation and is required for granule cell axon formation. Also phosphorylates SESN2 and SQSTM1 to regulate autophagy. Phosphorylates FLCN, promoting autophagy. Phosphorylates AMBRA1 in response to autophagy induction, releasing AMBRA1 from the cytoskeletal docking site to induce autophagosome nucleation. Phosphorylates ATG4B, leading to inhibit autophagy by decreasing both proteolytic activation and delipidation activities of ATG4B. This Mus musculus (Mouse) protein is Serine/threonine-protein kinase ULK1 (Ulk1).